The sequence spans 453 residues: Ribulose bisphosphate carboxylase large chain (453 aa).

Residues 1–2 constitute a propeptide that is removed on maturation; the sequence is MS. P3 carries the post-translational modification N-acetylproline. At K14 the chain carries N6,N6,N6-trimethyllysine. The substrate site is built by N123 and T173. K175 functions as the Proton acceptor in the catalytic mechanism. A substrate-binding site is contributed by K177. Mg(2+) is bound by residues K201, D203, and E204. K201 bears the N6-carboxylysine mark. The active-site Proton acceptor is H294. The substrate site is built by R295, H327, and S379.

This sequence belongs to the RuBisCO large chain family. Type I subfamily. As to quaternary structure, heterohexadecamer of 8 large chains and 8 small chains; disulfide-linked. The disulfide link is formed within the large subunit homodimers. Requires Mg(2+) as cofactor. Post-translationally, the disulfide bond which can form in the large chain dimeric partners within the hexadecamer appears to be associated with oxidative stress and protein turnover.

It localises to the plastid. The protein resides in the chloroplast. The catalysed reaction is 2 (2R)-3-phosphoglycerate + 2 H(+) = D-ribulose 1,5-bisphosphate + CO2 + H2O. It catalyses the reaction D-ribulose 1,5-bisphosphate + O2 = 2-phosphoglycolate + (2R)-3-phosphoglycerate + 2 H(+). RuBisCO catalyzes two reactions: the carboxylation of D-ribulose 1,5-bisphosphate, the primary event in carbon dioxide fixation, as well as the oxidative fragmentation of the pentose substrate in the photorespiration process. Both reactions occur simultaneously and in competition at the same active site. The chain is Ribulose bisphosphate carboxylase large chain from Sherardia arvensis (Blue field-madder).